We begin with the raw amino-acid sequence, 141 residues long: Large ribosomal subunit protein uL16 (141 aa).

The protein belongs to the universal ribosomal protein uL16 family. In terms of assembly, part of the 50S ribosomal subunit.

Functionally, binds 23S rRNA and is also seen to make contacts with the A and possibly P site tRNAs. This is Large ribosomal subunit protein uL16 from Petrotoga mobilis (strain DSM 10674 / SJ95).